The following is a 98-amino-acid chain: uncharacterized protein (98 aa).

Transmembrane regions (helical) follow at residues 13–33 (LFSL…IAIF) and 65–85 (IMVI…IFIS).

The protein resides in the membrane. This is an uncharacterized protein from Saccharomyces cerevisiae (strain ATCC 204508 / S288c) (Baker's yeast).